The chain runs to 154 residues: SsrA-binding protein (154 aa).

It belongs to the SmpB family.

It is found in the cytoplasm. Its function is as follows. Required for rescue of stalled ribosomes mediated by trans-translation. Binds to transfer-messenger RNA (tmRNA), required for stable association of tmRNA with ribosomes. tmRNA and SmpB together mimic tRNA shape, replacing the anticodon stem-loop with SmpB. tmRNA is encoded by the ssrA gene; the 2 termini fold to resemble tRNA(Ala) and it encodes a 'tag peptide', a short internal open reading frame. During trans-translation Ala-aminoacylated tmRNA acts like a tRNA, entering the A-site of stalled ribosomes, displacing the stalled mRNA. The ribosome then switches to translate the ORF on the tmRNA; the nascent peptide is terminated with the 'tag peptide' encoded by the tmRNA and targeted for degradation. The ribosome is freed to recommence translation, which seems to be the essential function of trans-translation. The sequence is that of SsrA-binding protein from Staphylococcus aureus (strain USA300).